A 148-amino-acid polypeptide reads, in one-letter code: Transcriptional regulator MraZ (148 aa).

SpoVT-AbrB domains are found at residues 5 to 51 (AAAL…PSPA) and 80 to 123 (ARTE…SEAG).

Belongs to the MraZ family. As to quaternary structure, forms oligomers.

The protein localises to the cytoplasm. It is found in the nucleoid. The chain is Transcriptional regulator MraZ from Dechloromonas aromatica (strain RCB).